Here is a 262-residue protein sequence, read N- to C-terminus: Type III pantothenate kinase (262 aa).

9–16 provides a ligand contact to ATP; that stretch reads DAGNSRIK. Residues Tyr-96 and 103-106 each bind substrate; that span reads GSDR. Asp-105 serves as the catalytic Proton acceptor. Thr-129 serves as a coordination point for ATP. Substrate is bound at residue Thr-189.

Belongs to the type III pantothenate kinase family. In terms of assembly, homodimer. Requires NH4(+) as cofactor. K(+) is required as a cofactor.

It localises to the cytoplasm. It carries out the reaction (R)-pantothenate + ATP = (R)-4'-phosphopantothenate + ADP + H(+). It functions in the pathway cofactor biosynthesis; coenzyme A biosynthesis; CoA from (R)-pantothenate: step 1/5. Catalyzes the phosphorylation of pantothenate (Pan), the first step in CoA biosynthesis. This is Type III pantothenate kinase from Burkholderia ambifaria (strain MC40-6).